The following is a 216-amino-acid chain: Trypsin inhibitor A (216 aa).

An N-terminal signal peptide occupies residues 1–24 (MKSTIFFLFLFCAFTTSYLPSAIA). Intrachain disulfides connect cysteine 63/cysteine 110 and cysteine 160/cysteine 169. The propeptide occupies 206–216 (AKKNHGLSRSE).

This sequence belongs to the protease inhibitor I3 (leguminous Kunitz-type inhibitor) family.

Its function is as follows. Inhibition of trypsin. The sequence is that of Trypsin inhibitor A (KTI3) from Glycine max (Soybean).